Here is a 490-residue protein sequence, read N- to C-terminus: Probable malate:quinone oxidoreductase (490 aa).

The protein belongs to the MQO family. The cofactor is FAD.

The catalysed reaction is (S)-malate + a quinone = a quinol + oxaloacetate. It participates in carbohydrate metabolism; tricarboxylic acid cycle; oxaloacetate from (S)-malate (quinone route): step 1/1. This Corynebacterium jeikeium (strain K411) protein is Probable malate:quinone oxidoreductase.